Here is a 263-residue protein sequence, read N- to C-terminus: 3-methyl-2-oxobutanoate hydroxymethyltransferase (263 aa).

Residues Asp-46 and Asp-85 each contribute to the Mg(2+) site. 3-methyl-2-oxobutanoate-binding positions include 46-47 (DS), Asp-85, and Lys-115. Residue Glu-117 participates in Mg(2+) binding. Glu-180 acts as the Proton acceptor in catalysis.

Belongs to the PanB family. In terms of assembly, homodecamer; pentamer of dimers. The cofactor is Mg(2+).

It is found in the cytoplasm. The enzyme catalyses 3-methyl-2-oxobutanoate + (6R)-5,10-methylene-5,6,7,8-tetrahydrofolate + H2O = 2-dehydropantoate + (6S)-5,6,7,8-tetrahydrofolate. The protein operates within cofactor biosynthesis; (R)-pantothenate biosynthesis; (R)-pantoate from 3-methyl-2-oxobutanoate: step 1/2. Functionally, catalyzes the reversible reaction in which hydroxymethyl group from 5,10-methylenetetrahydrofolate is transferred onto alpha-ketoisovalerate to form ketopantoate. The chain is 3-methyl-2-oxobutanoate hydroxymethyltransferase from Desulforapulum autotrophicum (strain ATCC 43914 / DSM 3382 / VKM B-1955 / HRM2) (Desulfobacterium autotrophicum).